The primary structure comprises 901 residues: Protein translocase subunit SecA (901 aa).

Residues glutamine 87, 105 to 109, and aspartate 512 each bind ATP; that span reads GEGKT. Residues 859 to 901 are disordered; that stretch reads HQDDDSAAAAALAAQTGERKVGRNDPCPCGSGKKYKQCHGRLQ. Residues cysteine 885, cysteine 887, cysteine 896, and histidine 897 each coordinate Zn(2+). Residues 891–901 are compositionally biased toward basic residues; the sequence is KKYKQCHGRLQ.

It belongs to the SecA family. As to quaternary structure, monomer and homodimer. Part of the essential Sec protein translocation apparatus which comprises SecA, SecYEG and auxiliary proteins SecDF-YajC and YidC. The cofactor is Zn(2+).

The protein localises to the cell inner membrane. It is found in the cytoplasm. It carries out the reaction ATP + H2O + cellular proteinSide 1 = ADP + phosphate + cellular proteinSide 2.. Its function is as follows. Part of the Sec protein translocase complex. Interacts with the SecYEG preprotein conducting channel. Has a central role in coupling the hydrolysis of ATP to the transfer of proteins into and across the cell membrane, serving both as a receptor for the preprotein-SecB complex and as an ATP-driven molecular motor driving the stepwise translocation of polypeptide chains across the membrane. This chain is Protein translocase subunit SecA, found in Escherichia coli O157:H7.